A 37-amino-acid polypeptide reads, in one-letter code: Cytochrome b6-f complex subunit 5 (37 aa).

Residues 5–25 (FLFGIVLGLIPITLAGLFVTA) form a helical membrane-spanning segment.

This sequence belongs to the PetG family. As to quaternary structure, the 4 large subunits of the cytochrome b6-f complex are cytochrome b6, subunit IV (17 kDa polypeptide, PetD), cytochrome f and the Rieske protein, while the 4 small subunits are PetG, PetL, PetM and PetN. The complex functions as a dimer.

The protein localises to the plastid. It localises to the chloroplast thylakoid membrane. In terms of biological role, component of the cytochrome b6-f complex, which mediates electron transfer between photosystem II (PSII) and photosystem I (PSI), cyclic electron flow around PSI, and state transitions. PetG is required for either the stability or assembly of the cytochrome b6-f complex. The polypeptide is Cytochrome b6-f complex subunit 5 (Solanum lycopersicum (Tomato)).